The following is a 565-amino-acid chain: Carboxylesterase 1D (565 aa).

Residues 1–18 (MRLYPLVWLFLAACTAWG) form the signal peptide. Asparagine 79 is a glycosylation site (N-linked (GlcNAc...) asparagine). A disulfide bridge connects residues cysteine 87 and cysteine 116. The Acyl-ester intermediate role is filled by serine 221. A disulfide bridge connects residues cysteine 273 and cysteine 284. The active-site Charge relay system is glutamate 353. Lysine 382 is subject to N6-succinyllysine. Catalysis depends on histidine 466, which acts as the Charge relay system. Asparagine 489 carries an N-linked (GlcNAc...) asparagine glycan. A Prevents secretion from ER motif is present at residues 562–565 (HVEL).

This sequence belongs to the type-B carboxylesterase/lipase family. In terms of assembly, homotrimer. In terms of tissue distribution, detected in liver, lung and testis, but not in kidney (at protein level).

It localises to the endoplasmic reticulum lumen. The protein localises to the cytoplasm. The protein resides in the cytosol. Its subcellular location is the lipid droplet. It is found in the microsome. It catalyses the reaction all-trans-retinyl hexadecanoate + H2O = all-trans-retinol + hexadecanoate + H(+). The enzyme catalyses a carboxylic ester + H2O = an alcohol + a carboxylate + H(+). It carries out the reaction a long-chain fatty acyl ethyl ester + H2O = a long-chain fatty acid + ethanol + H(+). Its activity is regulated as follows. FAEE-synthesizing and PNPB-hydrolyzing activities are both inhibited by DFP. Functionally, major lipase in white adipose tissue. Involved in the metabolism of xenobiotics and of natural substrates. Hydrolyzes triacylglycerols and monoacylglycerols, with a preference for monoacylglycerols. The susceptibility of the substrate increases with decreasing acyl chain length of the fatty acid moiety. Catalyzes the synthesis of fatty acid ethyl esters. Hydrolyzes retinyl esters. In Rattus norvegicus (Rat), this protein is Carboxylesterase 1D.